A 281-amino-acid chain; its full sequence is Putative dehydrogenase/reductase SDR family member 4-like 1 (281 aa).

An NADP(+)-binding site is contributed by 36–60; sequence LVTASTDWIGFAVAQRLAQDGAHVV. Ser172 contributes to the substrate binding site. Tyr185 serves as the catalytic Proton acceptor. NADP(+) is bound at residue Lys189. The Peroxisomal targeting signal signature appears at 279 to 281; sequence SRL.

This sequence belongs to the short-chain dehydrogenases/reductases (SDR) family.

In terms of biological role, putative oxidoreductase. This is Putative dehydrogenase/reductase SDR family member 4-like 1 from Homo sapiens (Human).